The primary structure comprises 431 residues: Enolase (431 aa).

Q166 is a binding site for (2R)-2-phosphoglycerate. E208 (proton donor) is an active-site residue. D245, E288, and D315 together coordinate Mg(2+). (2R)-2-phosphoglycerate is bound by residues K340, R369, S370, and K391. K340 functions as the Proton acceptor in the catalytic mechanism.

This sequence belongs to the enolase family. It depends on Mg(2+) as a cofactor.

It is found in the cytoplasm. The protein localises to the secreted. The protein resides in the cell surface. The catalysed reaction is (2R)-2-phosphoglycerate = phosphoenolpyruvate + H2O. It participates in carbohydrate degradation; glycolysis; pyruvate from D-glyceraldehyde 3-phosphate: step 4/5. Catalyzes the reversible conversion of 2-phosphoglycerate (2-PG) into phosphoenolpyruvate (PEP). It is essential for the degradation of carbohydrates via glycolysis. This Clostridium botulinum (strain Okra / Type B1) protein is Enolase.